Here is a 126-residue protein sequence, read N- to C-terminus: Large ribosomal subunit protein bL12 (126 aa).

The protein belongs to the bacterial ribosomal protein bL12 family. As to quaternary structure, homodimer. Part of the ribosomal stalk of the 50S ribosomal subunit. Forms a multimeric L10(L12)X complex, where L10 forms an elongated spine to which 2 to 4 L12 dimers bind in a sequential fashion. Binds GTP-bound translation factors.

Forms part of the ribosomal stalk which helps the ribosome interact with GTP-bound translation factors. Is thus essential for accurate translation. This chain is Large ribosomal subunit protein bL12, found in Bifidobacterium longum subsp. infantis (strain ATCC 15697 / DSM 20088 / JCM 1222 / NCTC 11817 / S12).